The chain runs to 321 residues: Probable arabinan endo-1,5-alpha-L-arabinosidase C (321 aa).

The N-terminal stretch at 1–18 is a signal peptide; that stretch reads MYLYTLILLFLASANVNA. Aspartate 33 serves as the catalytic Proton acceptor. N-linked (GlcNAc...) asparagine glycosylation occurs at asparagine 192. Residue glutamate 200 is the Proton donor of the active site. A glycan (N-linked (GlcNAc...) asparagine) is linked at asparagine 224.

It belongs to the glycosyl hydrolase 43 family.

It is found in the secreted. It catalyses the reaction Endohydrolysis of (1-&gt;5)-alpha-arabinofuranosidic linkages in (1-&gt;5)-arabinans.. The protein operates within glycan metabolism; L-arabinan degradation. In terms of biological role, endo-1,5-alpha-L-arabinanase involved in degradation of pectin. Its preferred substrate is linear 1,5-alpha-L-arabinan. This is Probable arabinan endo-1,5-alpha-L-arabinosidase C (abnC) from Aspergillus fumigatus (strain ATCC MYA-4609 / CBS 101355 / FGSC A1100 / Af293) (Neosartorya fumigata).